We begin with the raw amino-acid sequence, 203 residues long: MAHGPRYRVPFRRRREGKTNYRKRLKLLKSGKPRLVVRKSLNHHIAQIIVYDPKGDRTLVSAHTRELIRDFGWKGHCGNTPSAYLLGLLIGYKAKKAGIEEAILDIGLHPPVRGSSVFAVLKGAVDAGLNVPHSPEIFPEDYRIRGEHIAEYARMLKEQDEEKFRRQFGGYLEKGLDPEKLPEHFDEVKARIIEKFESEGARE.

This sequence belongs to the universal ribosomal protein uL18 family. As to quaternary structure, part of the 50S ribosomal subunit. Contacts the 5S and 23S rRNAs.

This is one of the proteins that bind and probably mediate the attachment of the 5S RNA into the large ribosomal subunit, where it forms part of the central protuberance. The polypeptide is Large ribosomal subunit protein uL18 (Pyrococcus abyssi (strain GE5 / Orsay)).